A 548-amino-acid polypeptide reads, in one-letter code: Folylpolyglutamate synthase (548 aa).

Residue 130–133 (GKGS) coordinates ATP. Residues S157, E234, and H262 each coordinate Mg(2+). ATP is bound by residues R382 and D396.

This sequence belongs to the folylpolyglutamate synthase family. The cofactor is a monovalent cation.

Its subcellular location is the mitochondrion inner membrane. The protein resides in the mitochondrion matrix. It is found in the cytoplasm. The catalysed reaction is (6S)-5,6,7,8-tetrahydrofolyl-(gamma-L-Glu)(n) + L-glutamate + ATP = (6S)-5,6,7,8-tetrahydrofolyl-(gamma-L-Glu)(n+1) + ADP + phosphate + H(+). It participates in cofactor biosynthesis; tetrahydrofolylpolyglutamate biosynthesis. Catalyzes conversion of folates to polyglutamate derivatives allowing concentration of folate compounds in the cell and the intracellular retention of these cofactors, which are important substrates for most of the folate-dependent enzymes that are involved in one-carbon transfer reactions involved in purine, pyrimidine and amino acid synthesis. Required for methionine synthesis and maintenance of intact mitochondrial DNA. Involved in telomere maintenance. This Saccharomyces cerevisiae (strain RM11-1a) (Baker's yeast) protein is Folylpolyglutamate synthase.